Here is a 243-residue protein sequence, read N- to C-terminus: Uridylate kinase (243 aa).

15-18 (KLSG) contributes to the ATP binding site. The interval 23-28 (GEEGFG) is involved in allosteric activation by GTP. Gly57 is a binding site for UMP. Residues Gly58 and Arg62 each coordinate ATP. UMP contacts are provided by residues Asp77 and 138–145 (TGNPFCTT). Thr165, Tyr171, and Asp174 together coordinate ATP.

This sequence belongs to the UMP kinase family. In terms of assembly, homohexamer.

It localises to the cytoplasm. The enzyme catalyses UMP + ATP = UDP + ADP. The protein operates within pyrimidine metabolism; CTP biosynthesis via de novo pathway; UDP from UMP (UMPK route): step 1/1. With respect to regulation, allosterically activated by GTP. Inhibited by UTP. In terms of biological role, catalyzes the reversible phosphorylation of UMP to UDP. In Shewanella denitrificans (strain OS217 / ATCC BAA-1090 / DSM 15013), this protein is Uridylate kinase.